Here is a 596-residue protein sequence, read N- to C-terminus: Bromodomain-containing protein 9 (596 aa).

A compositionally biased stretch (basic residues) spans 1 to 10 (MGKKHKKHKS). Disordered regions lie at residues 1–31 (MGKK…QYYV) and 49–119 (EVTE…SEGE). Basic and acidic residues predominate over residues 61-73 (SFYEDRSDHERER). Residues 74-84 (HKEKKKKKKKK) show a composition bias toward basic residues. Over residues 85 to 98 (SEKEKDKYLDEDER) the composition is skewed to basic and acidic residues. The segment covering 99 to 109 (RRRKEEKKRKR) has biased composition (basic residues). The 105-residue stretch at 148–252 (NESTPLQQLL…HTGFKMMSKQ (105 aa)) folds into the Bromo domain. Residues 226 to 228 (TYN) are histone H4K5ac H4K8ac and histone H4K5bu H4K8bu binding. Basic and acidic residues predominate over residues 537–547 (DFHDVHNDRGG). Residues 537 to 596 (DFHDVHNDRGGSRPSSSSSVSNNSERDHHLGSPSRISVGEQQDIHDPYEFLQSPETENQN) are disordered. Residues 548–559 (SRPSSSSSVSNN) show a composition bias toward low complexity.

Binds acetylated histones H3 and H4. Binds butyrylated histone H4.

It localises to the nucleus. In terms of biological role, plays a role in chromatin remodeling and regulation of transcription. Acts as a chromatin reader that recognizes and binds acylated histones: binds histones that are acetylated and/or butyrylated. The protein is Bromodomain-containing protein 9 (brd9) of Xenopus tropicalis (Western clawed frog).